A 680-amino-acid polypeptide reads, in one-letter code: Methionine--tRNA ligase (680 aa).

A 'HIGH' region motif is present at residues 14–24 (PYANGPIHLGH). Zn(2+) contacts are provided by Cys145, Cys148, Cys158, and Cys161. Residues 330-334 (KMSKS) carry the 'KMSKS' region motif. Residue Lys333 coordinates ATP. Positions 579-680 (DFAKVDFRIA…DGAQPGMRVK (102 aa)) constitute a tRNA-binding domain.

The protein belongs to the class-I aminoacyl-tRNA synthetase family. MetG type 1 subfamily. In terms of assembly, homodimer. Requires Zn(2+) as cofactor.

The protein localises to the cytoplasm. It catalyses the reaction tRNA(Met) + L-methionine + ATP = L-methionyl-tRNA(Met) + AMP + diphosphate. Is required not only for elongation of protein synthesis but also for the initiation of all mRNA translation through initiator tRNA(fMet) aminoacylation. The protein is Methionine--tRNA ligase of Hydrogenovibrio crunogenus (strain DSM 25203 / XCL-2) (Thiomicrospira crunogena).